A 338-amino-acid polypeptide reads, in one-letter code: tRNA methyltransferase 10 homolog A (338 aa).

Disordered stretches follow at residues 1–91 (MSSE…DRKR) and 296–338 (RVEG…SVPH). The residue at position 22 (Ser-22) is a Phosphoserine. Residues 52 to 80 (KQWEEQRELRKQKRKEKRKRKQLERQCQP) are a coiled coil. The segment covering 61–73 (RKQKRKEKRKRKQ) has biased composition (basic residues). Residues 88–279 (DRKRIRRDVV…TILPQRKGAV (192 aa)) enclose the SAM-dependent MTase TRM10-type domain. Basic and acidic residues predominate over residues 308–328 (EENRHELDSTHEEEKQDKENS). A compositionally biased stretch (polar residues) spans 329–338 (TESTVNSVPH). At Ser-335 the chain carries Phosphoserine.

This sequence belongs to the class IV-like SAM-binding methyltransferase superfamily. TRM10 family. Interacts with tRNA.

Its subcellular location is the nucleus. The protein resides in the nucleolus. The catalysed reaction is guanosine(9) in tRNA + S-adenosyl-L-methionine = N(1)-methylguanosine(9) in tRNA + S-adenosyl-L-homocysteine + H(+). Functionally, S-adenosyl-L-methionine-dependent guanine N(1)-methyltransferase that catalyzes the formation of N(1)-methylguanine at position 9 (m1G9) in tRNAs. Probably not able to catalyze formation of N(1)-methyladenine at position 9 (m1A9) in tRNAs. In Bos taurus (Bovine), this protein is tRNA methyltransferase 10 homolog A (TRMT10A).